A 281-amino-acid polypeptide reads, in one-letter code: tRNA dimethylallyltransferase (281 aa).

Interaction with substrate tRNA regions lie at residues 13-16 (DSAQ) and 133-137 (QRITR).

The protein belongs to the IPP transferase family. As to quaternary structure, monomer. The cofactor is Mg(2+).

It catalyses the reaction adenosine(37) in tRNA + dimethylallyl diphosphate = N(6)-dimethylallyladenosine(37) in tRNA + diphosphate. Catalyzes the transfer of a dimethylallyl group onto the adenine at position 37 in tRNAs that read codons beginning with uridine, leading to the formation of N6-(dimethylallyl)adenosine (i(6)A). The protein is tRNA dimethylallyltransferase of Novosphingobium aromaticivorans (strain ATCC 700278 / DSM 12444 / CCUG 56034 / CIP 105152 / NBRC 16084 / F199).